A 195-amino-acid polypeptide reads, in one-letter code: Thymidylate kinase (195 aa).

Residue 7 to 14 (GIDGSGKT) coordinates ATP.

Belongs to the thymidylate kinase family.

The catalysed reaction is dTMP + ATP = dTDP + ADP. In terms of biological role, phosphorylation of dTMP to form dTDP in both de novo and salvage pathways of dTTP synthesis. The protein is Thymidylate kinase (tmk) of Aquifex aeolicus (strain VF5).